A 490-amino-acid polypeptide reads, in one-letter code: UDP-N-acetylmuramate--L-alanine ligase (490 aa).

126–132 (GTHGKTT) provides a ligand contact to ATP.

The protein belongs to the MurCDEF family.

The protein localises to the cytoplasm. It catalyses the reaction UDP-N-acetyl-alpha-D-muramate + L-alanine + ATP = UDP-N-acetyl-alpha-D-muramoyl-L-alanine + ADP + phosphate + H(+). It functions in the pathway cell wall biogenesis; peptidoglycan biosynthesis. In terms of biological role, cell wall formation. In Sodalis glossinidius (strain morsitans), this protein is UDP-N-acetylmuramate--L-alanine ligase.